The sequence spans 177 residues: ATP synthase subunit delta (177 aa).

The protein belongs to the ATPase delta chain family. As to quaternary structure, F-type ATPases have 2 components, F(1) - the catalytic core - and F(0) - the membrane proton channel. F(1) has five subunits: alpha(3), beta(3), gamma(1), delta(1), epsilon(1). F(0) has three main subunits: a(1), b(2) and c(10-14). The alpha and beta chains form an alternating ring which encloses part of the gamma chain. F(1) is attached to F(0) by a central stalk formed by the gamma and epsilon chains, while a peripheral stalk is formed by the delta and b chains.

It localises to the cell inner membrane. In terms of biological role, f(1)F(0) ATP synthase produces ATP from ADP in the presence of a proton or sodium gradient. F-type ATPases consist of two structural domains, F(1) containing the extramembraneous catalytic core and F(0) containing the membrane proton channel, linked together by a central stalk and a peripheral stalk. During catalysis, ATP synthesis in the catalytic domain of F(1) is coupled via a rotary mechanism of the central stalk subunits to proton translocation. Its function is as follows. This protein is part of the stalk that links CF(0) to CF(1). It either transmits conformational changes from CF(0) to CF(1) or is implicated in proton conduction. The chain is ATP synthase subunit delta from Neisseria meningitidis serogroup C (strain 053442).